Here is a 198-residue protein sequence, read N- to C-terminus: Dermorphin-2 (198 aa).

An N-terminal signal peptide occupies residues 1 to 20; sequence MSFLKKSLLLILFLGLVSLS. Positions 21–45 are excised as a propeptide; sequence VCKEEKRVSEEENENEENHEEGSEM. A disordered region spans residues 24-198; the sequence is EEKRVSEEEN…AFGYPSGEAK (175 aa). D-alanine (Ala) is present on alanine 49. A Serine amide modification is found at serine 54. The segment covering 56–65 has biased composition (basic and acidic residues); that stretch reads EAKKIKRESE. Residues 56 to 80 constitute a propeptide that is removed on maturation; it reads EAKKIKRESEEEKEIEENHEEGSEM. Position 84 is a D-alanine (Ala) (alanine 84). Serine 89 carries the post-translational modification Serine amide. The propeptide occupies 91-115; that stretch reads EAKKIKRESEEENENEENHEEGSEM. Residues 100 to 109 are compositionally biased toward acidic residues; it reads EEENENEENH. D-alanine (Ala) is present on alanine 119. Serine 124 is subject to Serine amide. Basic and acidic residues predominate over residues 126-135; that stretch reads EAKKIKRESE. The propeptide occupies 126–150; the sequence is EAKKIKRESEEEKEIEENHEEGSEM. A D-alanine (Ala) modification is found at alanine 154. Residue serine 159 is modified to Serine amide. Residues 161 to 185 constitute a propeptide that is removed on maturation; sequence EAKKIKRESEEENENEENHEEGSEM. The span at 170–179 shows a compositional bias: acidic residues; that stretch reads EEENENEENH. Alanine 189 carries the post-translational modification D-alanine (Ala). At serine 194 the chain carries Serine amide. Residues 196–198 constitute a propeptide that is removed on maturation; that stretch reads EAK.

It belongs to the frog skin active peptide (FSAP) family. Dermorphin subfamily. In terms of tissue distribution, expressed by the skin glands.

It localises to the secreted. Its function is as follows. Dermorphin has a very potent opiate-like activity. It has high affinity and selectivity for mu-type opioid receptors. In Phyllomedusa sauvagei (Sauvage's leaf frog), this protein is Dermorphin-2.